The following is a 416-amino-acid chain: MMLRGGCQRVGARLRGLRRGPRGPADGARRGVVSCIDPSMGLSEEQKEFQKVAFNFAAREMAPHMAEWDQKELFPVDTMRKAAQLGFGGVYVQTDVGGAGLSRLDTSIIFEALATGCTSTTAYMSIHNMCVWIIDRFGSEEQRHRLCPPLCTMEKFASYCLTEPGSGSDAASLMTSAVRQHDHYILNGSKAFISGGGEADIYVVMCRTGGPGPRGISCVVVEKGTPGLSFGKKEKKVGWNSQPTQAVIFEDCAVPVANRIGDEGQGFLIAMKGLNGGRINVASCSLGAAHASIVLARDYLKVRKQFGEPLANSQYLQFQLADMAARLVASRLMIRTAATALQEEREDAIVLCSMAKLFATDECFAICNQALQMHGGYGYLKDYAVQQYVRDSRVHQILEGSNEVMRMLISRSLLQE.

The transit peptide at 1-23 (MMLRGGCQRVGARLRGLRRGPRG) directs the protein to the mitochondrion. The residue at position 51 (lysine 51) is an N6-acetyllysine; alternate. An N6-succinyllysine; alternate modification is found at lysine 51. FAD contacts are provided by residues 159-168 (YCLTEPGSGS) and 192-194 (FIS). Serine 168 is a substrate binding site. Lysine 232 bears the N6-acetyllysine mark. Lysine 272 carries the post-translational modification N6-succinyllysine. 275-278 (NGGR) lines the substrate pocket. FAD contacts are provided by residues arginine 303, 313–314 (SQ), and 372–376 (QMHGG). Catalysis depends on glutamate 399, which acts as the Proton acceptor. 401 to 403 (SNE) contacts FAD. Residue arginine 411 participates in substrate binding.

This sequence belongs to the acyl-CoA dehydrogenase family. Homotetramer, formed by a dimer of dimers. The cofactor is FAD.

The protein resides in the mitochondrion. It catalyses the reaction 2-methylpropanoyl-CoA + oxidized [electron-transfer flavoprotein] + H(+) = 2-methylpropenoyl-CoA + reduced [electron-transfer flavoprotein]. The catalysed reaction is (2S)-2-methylbutanoyl-CoA + oxidized [electron-transfer flavoprotein] + H(+) = (2E)-2-methylbut-2-enoyl-CoA + reduced [electron-transfer flavoprotein]. The enzyme catalyses propanoyl-CoA + oxidized [electron-transfer flavoprotein] + H(+) = acryloyl-CoA + reduced [electron-transfer flavoprotein]. It participates in amino-acid degradation; L-valine degradation. Isobutyryl-CoA dehydrogenase which catalyzes the conversion of 2-methylpropanoyl-CoA to (2E)-2-methylpropenoyl-CoA in the valine catabolic pathway. To a lesser extent, also able to catalyze the oxidation of (2S)-2-methylbutanoyl-CoA. This chain is Isobutyryl-CoA dehydrogenase, mitochondrial (ACAD8), found in Bos taurus (Bovine).